A 432-amino-acid polypeptide reads, in one-letter code: MGMTITEKILAEHAGKKEVHPGELITAKIDLAMANDVTAPLAIKILEKYGIDKVFDPERIALVLSHFVPAKDIKSAEQAKIVREFVKKHGIKWFFEEGEGIEHAILPEQGLVVPGDLVVGADSHTCTYGALGAFATGVGSTDIAYAMATGEVWLRVPESMKFIFYGKLKPWVMGKDLILYTIGQIGVDGALYRAMEFDGETIRNLSMEQRFTIANMAIEAGGKSGIISPDEKTIEYVKQRAKRPWKVYQSDPDAEYHSVYEWDASQIEPLVAWPYLPSNVHPVSESTHITIDQAFIGSCTNGRIEDLRVAAKVFEAALKQGKKVHPYVRCIVIPASKAIYKQALKEGLIDIFMEAGCVVSTSTCGPCLGGHMGVLAEGERCISTSNRNFPGRMGHPKSESYLANPAVVAASAIMGRIAHPDEVVKAETLAGV.

[4Fe-4S] cluster contacts are provided by C299, C364, and C367.

This sequence belongs to the aconitase/IPM isomerase family. LeuC type 2 subfamily. Heterodimer of LeuC and LeuD. Requires [4Fe-4S] cluster as cofactor.

It carries out the reaction (2R,3S)-3-isopropylmalate = (2S)-2-isopropylmalate. Its pathway is amino-acid biosynthesis; L-leucine biosynthesis; L-leucine from 3-methyl-2-oxobutanoate: step 2/4. Catalyzes the isomerization between 2-isopropylmalate and 3-isopropylmalate, via the formation of 2-isopropylmaleate. This chain is 3-isopropylmalate dehydratase large subunit, found in Aquifex aeolicus (strain VF5).